The following is a 21-amino-acid chain: Granulitoxin (21 aa).

The tract at residues 1–21 is disordered; the sequence is AKTGILDSDGPTVAGNSLSGT.

Its subcellular location is the secreted. It is found in the nematocyst. Functionally, injection into mice produces severe neurotoxic effects such as circular movements, aggressive behavior, dyspnea, tonic-clonic convulsion and death. The polypeptide is Granulitoxin (Bunodosoma cangicum (Sea anemone)).